Reading from the N-terminus, the 155-residue chain is NADPH-dependent 7-cyano-7-deazaguanine reductase (155 aa).

C53 serves as the catalytic Thioimide intermediate. D60 (proton donor) is an active-site residue. Substrate is bound by residues 75–77 (VES) and 94–95 (HE).

It belongs to the GTP cyclohydrolase I family. QueF type 1 subfamily.

It is found in the cytoplasm. It catalyses the reaction 7-aminomethyl-7-carbaguanine + 2 NADP(+) = 7-cyano-7-deazaguanine + 2 NADPH + 3 H(+). The protein operates within tRNA modification; tRNA-queuosine biosynthesis. Functionally, catalyzes the NADPH-dependent reduction of 7-cyano-7-deazaguanine (preQ0) to 7-aminomethyl-7-deazaguanine (preQ1). The chain is NADPH-dependent 7-cyano-7-deazaguanine reductase from Brucella suis (strain ATCC 23445 / NCTC 10510).